Consider the following 114-residue polypeptide: Beta-microseminoprotein J1 (114 aa).

The N-terminal stretch at 1–20 (MNVLLGGLVIFATFVTLCNA) is a signal peptide. Cystine bridges form between cysteine 22–cysteine 70, cysteine 38–cysteine 62, cysteine 57–cysteine 93, cysteine 60–cysteine 69, and cysteine 84–cysteine 107.

Belongs to the beta-microseminoprotein family.

Its subcellular location is the secreted. This is Beta-microseminoprotein J1 (MSPJ) from Saguinus oedipus (Cotton-top tamarin).